Here is a 1084-residue protein sequence, read N- to C-terminus: Cellulose synthase A catalytic subunit 6 [UDP-forming] (1084 aa).

Met-1 is subject to N-acetylmethionine. At 1-277 (MNTGGRLIAG…KSSKINPYRM (277 aa)) the chain is on the cytoplasmic side. Cys-39, Cys-42, Cys-58, Cys-61, Cys-66, Cys-69, Cys-81, and Cys-84 together coordinate Zn(2+). The RING-type; degenerate zinc finger occupies 39-85 (CQICRDEIELTVDGEPFVACNECAFPVCRPCYEYERREGNQACPQCK). The helical transmembrane segment at 278-298 (LIVLRLVILGLFFHYRILHPV) threads the bilayer. The Extracellular portion of the chain corresponds to 299–300 (KD). Residues 301–321 (AYALWLISVICEIWFAVSWVL) form a helical membrane-spanning segment. Over 322 to 868 (DQFPKWYPIE…INSVVYPWTS (547 aa)) the chain is Cytoplasmic. Residues Ser-360, Lys-366, Glu-367, and Asp-396 each contribute to the UDP-alpha-D-glucose site. Asp-396 is a catalytic residue. The stretch at 450-476 (VRERRAMKRDYEEFKVKINALVATAQK) forms a coiled coil. Lys-537 serves as a coordination point for UDP-alpha-D-glucose. Residues Lys-538 and Asp-562 each contribute to the Mn(2+) site. A coiled-coil region spans residues 675 to 703 (RKAKTVAADKKKKNREASKQIHALENIEE). Asp-785 is an active-site residue. The helical transmembrane segment at 869–889 (LPLIVYCSLPAICLLTGKFIV) threads the bilayer. Over 890–894 (PEISN) the chain is Extracellular. Residues 895–915 (YASILFMALFSSIAITGILEM) traverse the membrane as a helical segment. The Cytoplasmic portion of the chain corresponds to 916–930 (QWGKVGIDDWWRNEQ). The chain crosses the membrane as a helical span at residues 931-951 (FWVIGGVSAHLFALFQGLLKV). Over 952-980 (LAGVDTNFTVTSKAADDGEFSDLYLFKWT) the chain is Extracellular. N-linked (GlcNAc...) asparagine glycosylation is present at Asn-958. The chain crosses the membrane as a helical span at residues 981-1001 (SLLIPPMTLLIINVIGVIVGV). At 1002 to 1012 (SDAISNGYDSW) the chain is on the cytoplasmic side. Residues 1013–1033 (GPLFGRLFFALWVIIHLYPFL) traverse the membrane as a helical segment. Topologically, residues 1034-1042 (KGLLGKQDR) are extracellular. Residues 1043 to 1063 (MPTIIVVWSILLASILTLLWV) traverse the membrane as a helical segment. Residues 1064 to 1084 (RVNPFVAKGGPILEICGLDCL) are Cytoplasmic-facing.

Belongs to the glycosyltransferase 2 family. Plant cellulose synthase subfamily. In terms of assembly, interacts with CESA1 and CESA3. Interacts with STL1 and STL2, but not with GOT1. Binds to CSI1 and CSI3. Interacts with PAT24/TIP1. Requires Zn(2+) as cofactor. Mn(2+) is required as a cofactor. Post-translationally, S-acylated. Expressed in germinating seeds, seedlings, roots, stems, leaves and flowers. Not present in mature flowers.

The protein localises to the cell membrane. The catalysed reaction is [(1-&gt;4)-beta-D-glucosyl](n) + UDP-alpha-D-glucose = [(1-&gt;4)-beta-D-glucosyl](n+1) + UDP + H(+). It participates in glycan metabolism; plant cellulose biosynthesis. Its function is as follows. Catalytic subunit of cellulose synthase terminal complexes ('rosettes'), required for beta-1,4-glucan microfibril crystallization, a major mechanism of the cell wall formation. Involved in the primary cell wall formation. The presence of each protein CESA1 and CESA6 is critical for cell expansion. The hypocotyl elongation is based on a CESA6-dependent cell elongation in dark and a CESA6-independent cell elongation in light. The transition between these two mechanisms requires photosynthesis and PHYB, but not CRY1. The CESA6-dependent cell elongation seems to be independent of gibberellic acid, auxin and ethylene. May be involved in sensitivity to isoxaben. Associates with and moves along cortical microtubules for the process of cellulose deposition. The sequence is that of Cellulose synthase A catalytic subunit 6 [UDP-forming] from Arabidopsis thaliana (Mouse-ear cress).